Here is a 158-residue protein sequence, read N- to C-terminus: ATP synthase subunit beta, mitochondrial (158 aa).

It belongs to the ATPase alpha/beta chains family. F-type ATPases have 2 components, CF(1) - the catalytic core - and CF(0) - the membrane proton channel. CF(1) has five subunits: alpha(3), beta(3), gamma(1), delta(1), epsilon(1). CF(0) has three main subunits: a, b and c.

It localises to the mitochondrion. Its subcellular location is the mitochondrion inner membrane. It catalyses the reaction ATP + H2O + 4 H(+)(in) = ADP + phosphate + 5 H(+)(out). Mitochondrial membrane ATP synthase (F(1)F(0) ATP synthase or Complex V) produces ATP from ADP in the presence of a proton gradient across the membrane which is generated by electron transport complexes of the respiratory chain. F-type ATPases consist of two structural domains, F(1) - containing the extramembraneous catalytic core, and F(0) - containing the membrane proton channel, linked together by a central stalk and a peripheral stalk. During catalysis, ATP synthesis in the catalytic domain of F(1) is coupled via a rotary mechanism of the central stalk subunits to proton translocation. Subunits alpha and beta form the catalytic core in F(1). Rotation of the central stalk against the surrounding alpha(3)beta(3) subunits leads to hydrolysis of ATP in three separate catalytic sites on the beta subunits. This chain is ATP synthase subunit beta, mitochondrial, found in Schizaphis graminum (Green bug aphid).